The chain runs to 206 residues: Small ribosomal subunit protein uS4 (206 aa).

Residues 96-156 enclose the S4 RNA-binding domain; it reads GRLDNVVYRM…EKAKKQSRVK (61 aa).

Belongs to the universal ribosomal protein uS4 family. Part of the 30S ribosomal subunit. Contacts protein S5. The interaction surface between S4 and S5 is involved in control of translational fidelity.

Functionally, one of the primary rRNA binding proteins, it binds directly to 16S rRNA where it nucleates assembly of the body of the 30S subunit. Its function is as follows. With S5 and S12 plays an important role in translational accuracy. This Shigella flexneri protein is Small ribosomal subunit protein uS4.